A 269-amino-acid polypeptide reads, in one-letter code: Phosphonoacetaldehyde hydrolase (269 aa).

Catalysis depends on aspartate 9, which acts as the Nucleophile. Mg(2+) contacts are provided by aspartate 9 and alanine 11. Lysine 50 serves as the catalytic Schiff-base intermediate with substrate. Residue aspartate 184 participates in Mg(2+) binding.

It belongs to the HAD-like hydrolase superfamily. PhnX family. As to quaternary structure, homodimer. The cofactor is Mg(2+).

It catalyses the reaction phosphonoacetaldehyde + H2O = acetaldehyde + phosphate + H(+). Functionally, involved in phosphonate degradation. The chain is Phosphonoacetaldehyde hydrolase from Lysinibacillus sphaericus (strain C3-41).